A 150-amino-acid polypeptide reads, in one-letter code: Lipoprotein signal peptidase (150 aa).

3 helical membrane passes run 5 to 25 (LSLV…NWVV), 59 to 79 (QQWF…WFLW), and 83 to 103 (GQNW…GNFI). Catalysis depends on residues Asp113 and Asp129. The chain crosses the membrane as a helical span at residues 124–144 (IFNIADILLSVGFVVLFIAIL).

The protein belongs to the peptidase A8 family.

It is found in the cell membrane. It carries out the reaction Release of signal peptides from bacterial membrane prolipoproteins. Hydrolyzes -Xaa-Yaa-Zaa-|-(S,diacylglyceryl)Cys-, in which Xaa is hydrophobic (preferably Leu), and Yaa (Ala or Ser) and Zaa (Gly or Ala) have small, neutral side chains.. It participates in protein modification; lipoprotein biosynthesis (signal peptide cleavage). Its function is as follows. This protein specifically catalyzes the removal of signal peptides from prolipoproteins. The protein is Lipoprotein signal peptidase of Lactococcus lactis subsp. cremoris (strain MG1363).